A 232-amino-acid polypeptide reads, in one-letter code: Sugar fermentation stimulation protein homolog (232 aa).

It belongs to the SfsA family.

The chain is Sugar fermentation stimulation protein homolog from Moorella thermoacetica (strain ATCC 39073 / JCM 9320).